The chain runs to 70 residues: ATP synthase subunit c (70 aa).

The next 2 membrane-spanning stretches (helical) occupy residues 4–24 and 47–67; these read IAAG…DGIV and FIGV…ALMV.

It belongs to the ATPase C chain family. F-type ATPases have 2 components, F(1) - the catalytic core - and F(0) - the membrane proton channel. F(1) has five subunits: alpha(3), beta(3), gamma(1), delta(1), epsilon(1). F(0) has three main subunits: a(1), b(2) and c(10-14). The alpha and beta chains form an alternating ring which encloses part of the gamma chain. F(1) is attached to F(0) by a central stalk formed by the gamma and epsilon chains, while a peripheral stalk is formed by the delta and b chains.

The protein localises to the cell membrane. In terms of biological role, f(1)F(0) ATP synthase produces ATP from ADP in the presence of a proton or sodium gradient. F-type ATPases consist of two structural domains, F(1) containing the extramembraneous catalytic core and F(0) containing the membrane proton channel, linked together by a central stalk and a peripheral stalk. During catalysis, ATP synthesis in the catalytic domain of F(1) is coupled via a rotary mechanism of the central stalk subunits to proton translocation. Functionally, key component of the F(0) channel; it plays a direct role in translocation across the membrane. A homomeric c-ring of between 10-14 subunits forms the central stalk rotor element with the F(1) delta and epsilon subunits. This Levilactobacillus brevis (strain ATCC 367 / BCRC 12310 / CIP 105137 / JCM 1170 / LMG 11437 / NCIMB 947 / NCTC 947) (Lactobacillus brevis) protein is ATP synthase subunit c.